Consider the following 241-residue polypeptide: ATP synthase subunit a (241 aa).

5 helical membrane-spanning segments follow: residues 30–50 (GQVF…ISLG), 91–111 (FIGT…LIPW), 128–148 (INTT…AGLS), 193–213 (LVVG…VMFL), and 214–234 (GLFT…YYIG).

This sequence belongs to the ATPase A chain family. As to quaternary structure, F-type ATPases have 2 components, CF(1) - the catalytic core - and CF(0) - the membrane proton channel. CF(1) has five subunits: alpha(3), beta(3), gamma(1), delta(1), epsilon(1). CF(0) has four main subunits: a, b, b' and c.

Its subcellular location is the cellular thylakoid membrane. In terms of biological role, key component of the proton channel; it plays a direct role in the translocation of protons across the membrane. In Prochlorococcus marinus (strain MIT 9312), this protein is ATP synthase subunit a.